We begin with the raw amino-acid sequence, 95 residues long: Small ribosomal subunit protein uS19 (95 aa).

It belongs to the universal ribosomal protein uS19 family.

Its function is as follows. Protein S19 forms a complex with S13 that binds strongly to the 16S ribosomal RNA. This is Small ribosomal subunit protein uS19 from Roseiflexus castenholzii (strain DSM 13941 / HLO8).